Here is a 201-residue protein sequence, read N- to C-terminus: Recombination protein RecR (201 aa).

The C4-type zinc-finger motif lies at 60–75 (CKYCQSLTEKDVCDIC). The region spanning 83–177 (SKLCIIESML…KISRIGFGVP (95 aa)) is the Toprim domain.

Belongs to the RecR family.

Its function is as follows. May play a role in DNA repair. It seems to be involved in an RecBC-independent recombinational process of DNA repair. It may act with RecF and RecO. The polypeptide is Recombination protein RecR (Francisella philomiragia subsp. philomiragia (strain ATCC 25017 / CCUG 19701 / FSC 153 / O#319-036)).